The primary structure comprises 283 residues: Pantothenate synthetase (283 aa).

Position 30–37 (30–37) interacts with ATP; sequence MGNLHDGH. The active-site Proton donor is the H37. Q61 is a (R)-pantoate binding site. Q61 is a beta-alanine binding site. 149 to 152 contributes to the ATP binding site; that stretch reads GEKD. Q155 serves as a coordination point for (R)-pantoate. Residue 186–189 participates in ATP binding; sequence LSSR.

Belongs to the pantothenate synthetase family. In terms of assembly, homodimer.

The protein resides in the cytoplasm. It catalyses the reaction (R)-pantoate + beta-alanine + ATP = (R)-pantothenate + AMP + diphosphate + H(+). It functions in the pathway cofactor biosynthesis; (R)-pantothenate biosynthesis; (R)-pantothenate from (R)-pantoate and beta-alanine: step 1/1. Functionally, catalyzes the condensation of pantoate with beta-alanine in an ATP-dependent reaction via a pantoyl-adenylate intermediate. The sequence is that of Pantothenate synthetase from Shigella dysenteriae serotype 1 (strain Sd197).